A 155-amino-acid polypeptide reads, in one-letter code: UPF0225 protein ECA2332 (155 aa).

It belongs to the UPF0225 family.

This Pectobacterium atrosepticum (strain SCRI 1043 / ATCC BAA-672) (Erwinia carotovora subsp. atroseptica) protein is UPF0225 protein ECA2332.